The sequence spans 931 residues: Probable ubiquitin-like-specific protease 2B (931 aa).

Residues 204-224 (SLSDRSALSEASDSEDDEEDW) are disordered. Acidic residues predominate over residues 215 to 224 (SDSEDDEEDW). Residues His-489, Asp-522, and Cys-577 contribute to the active site. Residues 825 to 931 (HEEEIDESPP…PTGEAEEMEK (107 aa)) form a disordered region. Over residues 839-851 (SLKSATVGSNTAD) the composition is skewed to polar residues. A compositionally biased stretch (basic and acidic residues) spans 873-904 (NDRDEEKPLEHDLEIGDKTSEDVGDDCDQKEP).

The protein belongs to the peptidase C48 family.

Protease that catalyzes two essential functions in the SUMO pathway: processing of full-length SUMOs to their mature forms and deconjugation of SUMO from targeted proteins. The sequence is that of Probable ubiquitin-like-specific protease 2B (ULP2B) from Arabidopsis thaliana (Mouse-ear cress).